The sequence spans 355 residues: 3-isopropylmalate dehydrogenase (355 aa).

Position 78 to 91 (78 to 91) interacts with NAD(+); the sequence is GYKWDNLPRPERPE. Residues arginine 98, arginine 136, and aspartate 226 each contribute to the substrate site. The Mg(2+) site is built by aspartate 226, aspartate 250, and aspartate 254. An NAD(+)-binding site is contributed by 284 to 296; that stretch reads GSAPDIAGQDKAN.

The protein belongs to the isocitrate and isopropylmalate dehydrogenases family. LeuB type 1 subfamily. As to quaternary structure, homodimer. Mg(2+) serves as cofactor. The cofactor is Mn(2+).

Its subcellular location is the cytoplasm. The catalysed reaction is (2R,3S)-3-isopropylmalate + NAD(+) = 4-methyl-2-oxopentanoate + CO2 + NADH. It participates in amino-acid biosynthesis; L-leucine biosynthesis; L-leucine from 3-methyl-2-oxobutanoate: step 3/4. Catalyzes the oxidation of 3-carboxy-2-hydroxy-4-methylpentanoate (3-isopropylmalate) to 3-carboxy-4-methyl-2-oxopentanoate. The product decarboxylates to 4-methyl-2 oxopentanoate. The protein is 3-isopropylmalate dehydrogenase (leuB) of Arthrospira platensis (Spirulina platensis).